A 542-amino-acid polypeptide reads, in one-letter code: CTP synthase (542 aa).

The tract at residues 1–265 (MARYVFITGG…DSEVLSAFGI (265 aa)) is amidoligase domain. Ser13 contributes to the CTP binding site. Ser13 serves as a coordination point for UTP. 14-19 (SLGKGI) serves as a coordination point for ATP. Tyr54 provides a ligand contact to L-glutamine. Asp71 is an ATP binding site. Positions 71 and 139 each coordinate Mg(2+). CTP-binding positions include 146–148 (DIE), 186–191 (KTKPTQ), and Lys222. Residues 186 to 191 (KTKPTQ) and Lys222 contribute to the UTP site. One can recognise a Glutamine amidotransferase type-1 domain in the interval 291–541 (TIAVVGKYTG…IEAAIEQSRL (251 aa)). Gly353 contacts L-glutamine. The active-site Nucleophile; for glutamine hydrolysis is the Cys380. Residues 381–384 (FGMQ), Glu404, and Arg469 each bind L-glutamine. Active-site residues include His514 and Glu516.

It belongs to the CTP synthase family. In terms of assembly, homotetramer.

The catalysed reaction is UTP + L-glutamine + ATP + H2O = CTP + L-glutamate + ADP + phosphate + 2 H(+). It catalyses the reaction L-glutamine + H2O = L-glutamate + NH4(+). The enzyme catalyses UTP + NH4(+) + ATP = CTP + ADP + phosphate + 2 H(+). Its pathway is pyrimidine metabolism; CTP biosynthesis via de novo pathway; CTP from UDP: step 2/2. Allosterically activated by GTP, when glutamine is the substrate; GTP has no effect on the reaction when ammonia is the substrate. The allosteric effector GTP functions by stabilizing the protein conformation that binds the tetrahedral intermediate(s) formed during glutamine hydrolysis. Inhibited by the product CTP, via allosteric rather than competitive inhibition. In terms of biological role, catalyzes the ATP-dependent amination of UTP to CTP with either L-glutamine or ammonia as the source of nitrogen. Regulates intracellular CTP levels through interactions with the four ribonucleotide triphosphates. The chain is CTP synthase from Brucella canis (strain ATCC 23365 / NCTC 10854 / RM-666).